Reading from the N-terminus, the 358-residue chain is Phosphoserine aminotransferase (358 aa).

Arginine 41 contributes to the L-glutamate binding site. Pyridoxal 5'-phosphate contacts are provided by residues 75–76 (AS), tryptophan 100, threonine 148, aspartate 167, and glutamine 190. An N6-(pyridoxal phosphate)lysine modification is found at lysine 191. 233–234 (NT) is a binding site for pyridoxal 5'-phosphate.

Belongs to the class-V pyridoxal-phosphate-dependent aminotransferase family. SerC subfamily. Homodimer. Pyridoxal 5'-phosphate serves as cofactor.

The protein localises to the cytoplasm. The catalysed reaction is O-phospho-L-serine + 2-oxoglutarate = 3-phosphooxypyruvate + L-glutamate. It carries out the reaction 4-(phosphooxy)-L-threonine + 2-oxoglutarate = (R)-3-hydroxy-2-oxo-4-phosphooxybutanoate + L-glutamate. It functions in the pathway amino-acid biosynthesis; L-serine biosynthesis; L-serine from 3-phospho-D-glycerate: step 2/3. Its pathway is cofactor biosynthesis; pyridoxine 5'-phosphate biosynthesis; pyridoxine 5'-phosphate from D-erythrose 4-phosphate: step 3/5. Functionally, catalyzes the reversible conversion of 3-phosphohydroxypyruvate to phosphoserine and of 3-hydroxy-2-oxo-4-phosphonooxybutanoate to phosphohydroxythreonine. In Campylobacter jejuni subsp. doylei (strain ATCC BAA-1458 / RM4099 / 269.97), this protein is Phosphoserine aminotransferase.